We begin with the raw amino-acid sequence, 104 residues long: MTKSELIEILTKRQAHLKSDDVDLAVKSLLEMMGGALSGGDRIEIRGFGSFSLHYRPPRCGRNPKTGESVALPGKYVPHFKPGKELRERVASVVPLGECGDITE.

This sequence belongs to the bacterial histone-like protein family. In terms of assembly, heterodimer of an alpha and a beta chain.

In terms of biological role, this protein is one of the two subunits of integration host factor, a specific DNA-binding protein that functions in genetic recombination as well as in transcriptional and translational control. This is Integration host factor subunit beta from Xylella fastidiosa (strain M23).